The primary structure comprises 321 residues: Nucleotide-binding protein GOX0815 (321 aa).

27–34 (GLSGAGKS) is a binding site for ATP. 72 to 75 (DVRS) contacts GTP.

The protein belongs to the RapZ-like family.

Functionally, displays ATPase and GTPase activities. The sequence is that of Nucleotide-binding protein GOX0815 from Gluconobacter oxydans (strain 621H) (Gluconobacter suboxydans).